A 222-amino-acid polypeptide reads, in one-letter code: Germin-like protein 11-1 (222 aa).

The first 23 residues, 1–23 (MKLSTVLCCYLLLLGLFAPEIIS), serve as a signal peptide directing secretion. Cys-32 and Cys-49 are joined by a disulfide. Residues 72–195 (DNMVRSSANI…AMFAPDSEVA (124 aa)) form the Cupin type-1 domain. Residues His-111, His-113, Glu-118, and His-157 each contribute to the Mn(2+) site.

It belongs to the germin family. As to quaternary structure, oligomer (believed to be a pentamer but probably hexamer).

Its subcellular location is the secreted. It localises to the extracellular space. It is found in the apoplast. Its function is as follows. May play a role in plant defense. Probably has no oxalate oxidase activity even if the active site is conserved. This is Germin-like protein 11-1 from Oryza sativa subsp. japonica (Rice).